A 208-amino-acid polypeptide reads, in one-letter code: Ras-related protein RABH1b (208 aa).

Residue 16 to 23 (GDQSVGKT) coordinates GTP. Positions 38–46 (YQATIGIDF) match the Effector region motif. Residues 64–68 (DTAGQ), 122–125 (NKTD), and 152–153 (SA) contribute to the GTP site. 2 S-geranylgeranyl cysteine lipidation sites follow: Cys-206 and Cys-208. Cys-208 is modified (cysteine methyl ester).

This sequence belongs to the small GTPase superfamily. Rab family. In terms of assembly, interacts with the C-terminus of GC5, but not with GC3. Expressed in roots, stems, leaves and flowers.

It is found in the golgi apparatus membrane. It localises to the cytoplasm. The protein localises to the cytosol. In terms of biological role, protein transport. Regulator of membrane traffic from the Golgi apparatus towards the endoplasmic reticulum (ER). Binds GTP and GDP and possesses intrinsic GTPase activity. This Arabidopsis thaliana (Mouse-ear cress) protein is Ras-related protein RABH1b (RABH1B).